Here is a 644-residue protein sequence, read N- to C-terminus: Protein ETHYLENE-INSENSITIVE 3-like 1b (644 aa).

2 disordered regions span residues 47 to 75 and 97 to 131; these read QCVMGEGDLVDPPPESFPDAGEDDSDDDV and ELQLSRGKDPAGGVVGDPSKPRQSQEQARRKKMSR. A compositionally biased stretch (acidic residues) spans 66-75; sequence AGEDDSDDDV.

Belongs to the EIN3 family. In terms of tissue distribution, highly expressed in roots. Expressed at low levels in leaves and panicles.

It is found in the nucleus. Functionally, transcription factor acting as a positive regulator in the ethylene response pathway. Involved in wound signaling by binding specifically to the DNA sequence 5'-ATGTACCT-3' found in the promoter of some wound-inducible genes. Binds directly to the DNA sequence 5'-TGTTACAAATACC-3' in the promoter of the GA20OX2 gene to activate its expression at the transcriptional level during ethylene signaling. The protein is Protein ETHYLENE-INSENSITIVE 3-like 1b of Oryza sativa subsp. japonica (Rice).